Here is a 188-residue protein sequence, read N- to C-terminus: dCTP deaminase (188 aa).

DCTP-binding positions include 111-116, 135-137, Gln-156, Tyr-170, and Gln-180; these read KSTYAR and TLE. Residue Glu-137 is the Proton donor/acceptor of the active site.

The protein belongs to the dCTP deaminase family. In terms of assembly, homotrimer.

It catalyses the reaction dCTP + H2O + H(+) = dUTP + NH4(+). It functions in the pathway pyrimidine metabolism; dUMP biosynthesis; dUMP from dCTP (dUTP route): step 1/2. Its function is as follows. Catalyzes the deamination of dCTP to dUTP. The protein is dCTP deaminase of Ralstonia pickettii (strain 12J).